Reading from the N-terminus, the 319-residue chain is Acetyl esterase (319 aa).

Positions 91–93 match the Involved in the stabilization of the negatively charged intermediate by the formation of the oxyanion hole motif; the sequence is HGG. Residues Ser-165, Asp-262, and His-292 contribute to the active site.

The protein belongs to the 'GDXG' lipolytic enzyme family. As to quaternary structure, homodimer. Interacts with MalT and MelA.

It is found in the cytoplasm. Functionally, displays esterase activity towards short chain fatty esters (acyl chain length of up to 8 carbons). Able to hydrolyze triacetylglycerol (triacetin) and tributyrylglycerol (tributyrin), but not trioleylglycerol (triolein) or cholesterol oleate. Negatively regulates MalT activity by antagonizing maltotriose binding. Inhibits MelA galactosidase activity. This chain is Acetyl esterase, found in Escherichia coli O9:H4 (strain HS).